The primary structure comprises 585 residues: Tyramine beta-hydroxylase (585 aa).

Positions 1–21 (MKCANAAALLFFVLCDIGVHG) are cleaved as a signal peptide. Residues 31 to 142 (SNVTVKWQTD…GTTQFYIAAS (112 aa)) enclose the DOMON domain. Asn32 and Asn71 each carry an N-linked (GlcNAc...) asparagine glycan. Tyr206 is a catalytic residue. 2 cysteine pairs are disulfide-bonded: Cys208-Cys258 and Cys247-Cys270. Positions 240 and 241 each coordinate Cu(2+). Positions 308, 386, and 388 each coordinate Cu(2+). 3 disulfide bridges follow: Cys365/Cys477, Cys369/Cys534, and Cys440/Cys462. His386 is an active-site residue. Residue Asn449 is glycosylated (N-linked (GlcNAc...) asparagine). Met461 is a binding site for Cu(2+). Residue Asn483 is glycosylated (N-linked (GlcNAc...) asparagine).

Belongs to the copper type II ascorbate-dependent monooxygenase family. Requires Cu(2+) as cofactor.

Its subcellular location is the cytoplasmic vesicle. It is found in the secretory vesicle. The protein resides in the synaptic vesicle. The enzyme catalyses tyramine + L-ascorbate + O2 = (R)-octopamine + L-dehydroascorbate + H2O. In terms of biological role, catalyzes the hydroxylation of tyramine into octopamine, a neurotransmitter involved in pharyngeal pumping and egg laying. In Caenorhabditis briggsae, this protein is Tyramine beta-hydroxylase (tbh-1).